The chain runs to 192 residues: Protein hunchback (192 aa).

3 disordered regions span residues 16–59, 88–108, and 151–192; these read SHHH…SNTN, AAMT…WPGL, and ALTP…KYMA. Positions 17–31 are enriched in basic residues; it reads HHHHHHHAHHSRRQH. Residues 92–103 show a composition bias toward polar residues; it reads PSPSNNDQNSPL. A compositionally biased stretch (basic and acidic residues) spans 173-192; the sequence is EPEKEHDLMSNSSEDMKYMA.

This sequence belongs to the hunchback C2H2-type zinc-finger protein family.

Its subcellular location is the nucleus. Gap class segmentation protein that controls development of head structures. The protein is Protein hunchback (hb) of Drosophila adiastola (Fruit fly).